The sequence spans 255 residues: Malonyl-[acyl-carrier protein] O-methyltransferase (255 aa).

This sequence belongs to the methyltransferase superfamily.

It carries out the reaction malonyl-[ACP] + S-adenosyl-L-methionine = malonyl-[ACP] methyl ester + S-adenosyl-L-homocysteine. The protein operates within cofactor biosynthesis; biotin biosynthesis. Converts the free carboxyl group of a malonyl-thioester to its methyl ester by transfer of a methyl group from S-adenosyl-L-methionine (SAM). It allows to synthesize pimeloyl-ACP via the fatty acid synthetic pathway. The chain is Malonyl-[acyl-carrier protein] O-methyltransferase from Acinetobacter baylyi (strain ATCC 33305 / BD413 / ADP1).